A 476-amino-acid polypeptide reads, in one-letter code: Glycogen synthase (476 aa).

ADP-alpha-D-glucose is bound at residue Lys-15.

Belongs to the glycosyltransferase 1 family. Bacterial/plant glycogen synthase subfamily.

The enzyme catalyses [(1-&gt;4)-alpha-D-glucosyl](n) + ADP-alpha-D-glucose = [(1-&gt;4)-alpha-D-glucosyl](n+1) + ADP + H(+). The protein operates within glycan biosynthesis; glycogen biosynthesis. Functionally, synthesizes alpha-1,4-glucan chains using ADP-glucose. The protein is Glycogen synthase of Actinobacillus succinogenes (strain ATCC 55618 / DSM 22257 / CCUG 43843 / 130Z).